The primary structure comprises 104 residues: Integration host factor subunit alpha (104 aa).

The interval 51-70 (GNFQLRDKPQRPGRNPKTGE) is disordered.

Belongs to the bacterial histone-like protein family. As to quaternary structure, heterodimer of an alpha and a beta chain.

This protein is one of the two subunits of integration host factor, a specific DNA-binding protein that functions in genetic recombination as well as in transcriptional and translational control. This is Integration host factor subunit alpha from Ralstonia nicotianae (strain ATCC BAA-1114 / GMI1000) (Ralstonia solanacearum).